The chain runs to 218 residues: Large ribosomal subunit protein bL25 (218 aa).

The tract at residues 185–218 (ARAAEEEAPAAEETTAEPELVRERREPRAEEEEE) is disordered. The segment covering 190 to 200 (EEAPAAEETTA) has biased composition (acidic residues). Over residues 203–212 (ELVRERREPR) the composition is skewed to basic and acidic residues.

This sequence belongs to the bacterial ribosomal protein bL25 family. CTC subfamily. Part of the 50S ribosomal subunit; part of the 5S rRNA/L5/L18/L25 subcomplex. Contacts the 5S rRNA. Binds to the 5S rRNA independently of L5 and L18.

Functionally, this is one of the proteins that binds to the 5S RNA in the ribosome where it forms part of the central protuberance. This Roseiflexus castenholzii (strain DSM 13941 / HLO8) protein is Large ribosomal subunit protein bL25.